The sequence spans 695 residues: Probable rhamnogalacturonate lyase C (695 aa).

An N-terminal signal peptide occupies residues 1-21; the sequence is MFLPSRKALAFLACLASHSVA. Residues Asn-28, Asn-96, Asn-118, Asn-144, Asn-199, Asn-285, Asn-532, and Asn-638 are each glycosylated (N-linked (GlcNAc...) asparagine).

Belongs to the polysaccharide lyase 4 family.

The protein localises to the secreted. It carries out the reaction Endotype eliminative cleavage of L-alpha-rhamnopyranosyl-(1-&gt;4)-alpha-D-galactopyranosyluronic acid bonds of rhamnogalacturonan I domains in ramified hairy regions of pectin leaving L-rhamnopyranose at the reducing end and 4-deoxy-4,5-unsaturated D-galactopyranosyluronic acid at the non-reducing end.. Pectinolytic enzymes consist of four classes of enzymes: pectin lyase, polygalacturonase, pectin methylesterase and rhamnogalacturonase. Degrades the rhamnogalacturonan I (RG-I) backbone of pectin. In Aspergillus oryzae (strain ATCC 42149 / RIB 40) (Yellow koji mold), this protein is Probable rhamnogalacturonate lyase C (rglC).